A 677-amino-acid polypeptide reads, in one-letter code: Fermitin family homolog 1 (677 aa).

Residues 96-653 (MLRLRLPNLK…HEYIGGYIFL (558 aa)) enclose the FERM domain. Phosphoserine occurs at positions 170, 179, and 361. The PH domain occupies 337-433 (ESEVDEIEAA…EVVPNVNVAE (97 aa)).

Belongs to the kindlin family. Interacts with the cytoplasmic domain of integrins ITGB1 and ITGB3.

The protein resides in the cytoplasm. The protein localises to the cytoskeleton. Its subcellular location is the cell junction. It is found in the focal adhesion. It localises to the cell projection. The protein resides in the ruffle membrane. Involved in cell adhesion. Contributes to integrin activation. When coexpressed with talin, potentiates activation of ITGA2B. Required for normal keratinocyte proliferation. Required for normal polarization of basal keratinocytes in skin, and for normal cell shape. Required for normal adhesion of keratinocytes to fibronectin and laminin, and for normal keratinocyte migration to wound sites. The polypeptide is Fermitin family homolog 1 (FERMT1) (Pongo abelii (Sumatran orangutan)).